An 89-amino-acid chain; its full sequence is Small ribosomal subunit protein uS17 (89 aa).

The protein belongs to the universal ribosomal protein uS17 family. Part of the 30S ribosomal subunit.

Functionally, one of the primary rRNA binding proteins, it binds specifically to the 5'-end of 16S ribosomal RNA. The polypeptide is Small ribosomal subunit protein uS17 (Leptospira interrogans serogroup Icterohaemorrhagiae serovar Lai (strain 56601)).